The sequence spans 330 residues: 4-hydroxythreonine-4-phosphate dehydrogenase (330 aa).

2 residues coordinate substrate: histidine 135 and threonine 136. Positions 165, 210, and 266 each coordinate a divalent metal cation. Residues lysine 274, asparagine 283, and arginine 292 each coordinate substrate.

The protein belongs to the PdxA family. In terms of assembly, homodimer. Zn(2+) serves as cofactor. It depends on Mg(2+) as a cofactor. Requires Co(2+) as cofactor.

It is found in the cytoplasm. It catalyses the reaction 4-(phosphooxy)-L-threonine + NAD(+) = 3-amino-2-oxopropyl phosphate + CO2 + NADH. It functions in the pathway cofactor biosynthesis; pyridoxine 5'-phosphate biosynthesis; pyridoxine 5'-phosphate from D-erythrose 4-phosphate: step 4/5. Functionally, catalyzes the NAD(P)-dependent oxidation of 4-(phosphooxy)-L-threonine (HTP) into 2-amino-3-oxo-4-(phosphooxy)butyric acid which spontaneously decarboxylates to form 3-amino-2-oxopropyl phosphate (AHAP). This chain is 4-hydroxythreonine-4-phosphate dehydrogenase, found in Vibrio cholerae serotype O1 (strain ATCC 39315 / El Tor Inaba N16961).